A 352-amino-acid chain; its full sequence is MVRPVRHKKPVNYSQFDHSDSDDDFVSATVPLNKKSRTAPKELKQDKPKPNLNNLRKEEIPVQEKTPKKRLPEGTFSIPASAVPCTKMALDDKLYQRDLEVALALSVKELPTVTTNVQNSQDKSIEKHGSSKIETMNKSPHISNCSVASDYLDLDKITVEDDVGGVQGKRKAASKAAAQQRKILLEGSDGDSANDTEPDFAPGEDSEDDSDFCESEDNDEDFSMRKSKVKEIKKKEVKVKSPVEKKEKKSKSKCNALVTSVDSAPAAVKSESQSLPKKVSLSSDTTRKPLEIRSPSAESKKPKWVPPAASGGSRSSSSPLVVVSVKSPNQSLRLGLSRLARVKPLHPNATST.

A compositionally biased stretch (basic residues) spans 1-10; sequence MVRPVRHKKP. 2 disordered regions span residues 1 to 78 and 115 to 144; these read MVRP…TFSI and TNVQ…HISN. A phosphoserine mark is found at Ser19 and Ser21. The interval 30-49 is interaction with DNA; the sequence is VPLNKKSRTAPKELKQDKPK. Over residues 39–72 the composition is skewed to basic and acidic residues; the sequence is APKELKQDKPKPNLNNLRKEEIPVQEKTPKKRLP. At Thr66 the chain carries Phosphothreonine. Residues Ser120 and Ser124 each carry the phosphoserine modification. Positions 132 to 144 are enriched in polar residues; sequence KIETMNKSPHISN. The short motif at 154–159 is the SIM motif element; the sequence is LDKITV. Positions 162–323 are disordered; it reads DVGGVQGKRK…RSSSSPLVVV (162 aa). Residues 188 to 221 show a composition bias toward acidic residues; sequence SDGDSANDTEPDFAPGEDSEDDSDFCESEDNDED. Residues 229-247 show a composition bias toward basic and acidic residues; it reads VKEIKKKEVKVKSPVEKKE. The interval 243-304 is interaction with DNA; it reads VEKKEKKSKS…PSAESKKPKW (62 aa). Residue Lys251 forms a Glycyl lysine isopeptide (Lys-Gly) (interchain with G-Cter in ubiquitin; alternate) linkage. Lys269 is covalently cross-linked (Glycyl lysine isopeptide (Lys-Gly) (interchain with G-Cter in SUMO)). Residues 270–284 show a composition bias toward polar residues; sequence SESQSLPKKVSLSSD. A Phosphoserine modification is found at Ser280. The WVPP motif motif lies at 304-307; the sequence is WVPP. The span at 306–323 shows a compositional bias: low complexity; the sequence is PPAASGGSRSSSSPLVVV. The tract at residues 313-352 is interaction with RAD51; sequence SRSSSSPLVVVSVKSPNQSLRLGLSRLARVKPLHPNATST. A Phosphoserine modification is found at Ser327.

Monomer; elongated monodisperse monomer. Interacts (via C-terminal region) with RAD51; the interaction is direct. Interacts (via SIM motif) with WDR48/UAF1; WDR48/UAF1 and RAD51AP1 cooperate together to stimulate RAD51-mediated homologous recombination (HR). Interacts (via WVPP motif) with DMC1; the interaction is direct. Interacts with PALB2. Interacts with RAD52. As to quaternary structure, does not interact with DMC1; lack of interaction is caused by the absence of the WVPP motif in this isoform. Sumoylation with SUMO2/3 by NSMCE2/MMS21 promotes stabilization, possibly by preventing ubiquitination. Sumoylation is required for alternative lengthening of telomeres (ALT) pathway. Highly expressed in testis and thymus. Lower levels in colon and small intestine. Little or no expression in spleen, prostate, ovary and peripheral blood leukocytes.

It localises to the chromosome. The protein resides in the nucleus. Its subcellular location is the telomere. Structure-specific DNA-binding protein involved in DNA repair by promoting RAD51-mediated homologous recombination. Acts by stimulating D-Loop formation by RAD51: specifically enhances joint molecule formation through its structure-specific DNA interaction and its interaction with RAD51. Binds single-stranded DNA (ssDNA), double-stranded DNA (dsDNA) and secondary DNA structures, such as D-loop structures: has a strong preference for branched-DNA structures that are obligatory intermediates during joint molecule formation. Cooperates with WDR48/UAF1 to stimulate RAD51-mediated homologous recombination: both WDR48/UAF1 and RAD51AP1 have coordinated role in DNA-binding during homologous recombination and DNA repair. WDR48/UAF1 and RAD51AP1 also have a coordinated role in DNA-binding to promote USP1-mediated deubiquitination of FANCD2. Also involved in meiosis by promoting DMC1-mediated homologous meiotic recombination. Key mediator of alternative lengthening of telomeres (ALT) pathway, a homology-directed repair mechanism of telomere elongation that controls proliferation in aggressive cancers, by stimulating homologous recombination. May also bind RNA; additional evidences are however required to confirm RNA-binding in vivo. In Homo sapiens (Human), this protein is RAD51-associated protein 1.